Here is a 157-residue protein sequence, read N- to C-terminus: S-ribosylhomocysteine lyase (157 aa).

H54, H58, and C126 together coordinate Fe cation.

It belongs to the LuxS family. Homodimer. The cofactor is Fe cation.

It catalyses the reaction S-(5-deoxy-D-ribos-5-yl)-L-homocysteine = (S)-4,5-dihydroxypentane-2,3-dione + L-homocysteine. Involved in the synthesis of autoinducer 2 (AI-2) which is secreted by bacteria and is used to communicate both the cell density and the metabolic potential of the environment. The regulation of gene expression in response to changes in cell density is called quorum sensing. Catalyzes the transformation of S-ribosylhomocysteine (RHC) to homocysteine (HC) and 4,5-dihydroxy-2,3-pentadione (DPD). The chain is S-ribosylhomocysteine lyase from Bacillus pumilus (strain SAFR-032).